A 161-amino-acid chain; its full sequence is Glutaredoxin-2, mitochondrial (161 aa).

Residues 1–19 (MLWRRAALAGTRLVWSRSG) constitute a mitochondrion transit peptide. Ser20 is subject to Phosphoserine. A Glutaredoxin domain is found at 54 to 154 (VNQIQETISD…PLVHQCYLKK (101 aa)). Cys65 serves as a coordination point for [2Fe-2S] cluster. Lys71 serves as a coordination point for glutathione. Cys74 carries the S-glutathionyl cysteine; alternate modification. A disulfide bond links Cys74 and Cys77. The glutathione site is built by Gln106 and Val118. Cys150 contacts [2Fe-2S] cluster.

This sequence belongs to the glutaredoxin family. Monomer; active form. Homodimer; inactive form. The homodimer is probably linked by 1 2Fe-2S cluster.

Its subcellular location is the mitochondrion. With respect to regulation, the 2Fe-2S present in the homodimer leads to inactivation of the enzyme. The 2Fe-2S may serve as a redox sensor: the presence of one-electron oxidants or reductants leading to the loss of the 2Fe-2S cluster, subsequent monomerization and activation of the enzyme. Its function is as follows. Glutathione-dependent oxidoreductase that facilitates the maintenance of mitochondrial redox homeostasis upon induction of apoptosis by oxidative stress. Involved in response to hydrogen peroxide and regulation of apoptosis caused by oxidative stress. Acts as a very efficient catalyst of monothiol reactions because of its high affinity for protein glutathione-mixed disulfides. Can receive electrons not only from glutathione (GSH), but also from thioredoxin reductase supporting both monothiol and dithiol reactions. Efficiently catalyzes both glutathionylation and deglutathionylation of mitochondrial complex I, which in turn regulates the superoxide production by the complex. Overexpression decreases the susceptibility to apoptosis and prevents loss of cardiolipin and cytochrome c release. This is Glutaredoxin-2, mitochondrial (GLRX2) from Pongo abelii (Sumatran orangutan).